Reading from the N-terminus, the 445-residue chain is Phosphoglucosamine mutase (445 aa).

Ser99 acts as the Phosphoserine intermediate in catalysis. The Mg(2+) site is built by Ser99, Asp242, Asp244, and Asp246. Ser99 is subject to Phosphoserine.

This sequence belongs to the phosphohexose mutase family. Mg(2+) serves as cofactor. Activated by phosphorylation.

It carries out the reaction alpha-D-glucosamine 1-phosphate = D-glucosamine 6-phosphate. Functionally, catalyzes the conversion of glucosamine-6-phosphate to glucosamine-1-phosphate. In Helicobacter pylori (strain G27), this protein is Phosphoglucosamine mutase.